The following is a 107-amino-acid chain: UPF0145 protein CHY_0465 (107 aa).

Belongs to the UPF0145 family.

This chain is UPF0145 protein CHY_0465, found in Carboxydothermus hydrogenoformans (strain ATCC BAA-161 / DSM 6008 / Z-2901).